A 72-amino-acid polypeptide reads, in one-letter code: Lantibiotic Flvbeta.g (72 aa).

Residues 1 to 34 (MNNNNFDMEKFKKLAAIVSEGEIDEMLDETTVGA) constitute a propeptide, cleaved by FlvT. Positions 36 to 40 (STLPC) form a cross-link, lanthionine (Ser-Cys); by FlvM2. 2,3-didehydrobutyrine; by FlvM2 occurs at positions 37, 46, and 48. Cross-links (beta-methyllanthionine (Thr-Cys); by FlvM2) lie at residues 55-61 (TTGFDWC), 63-66 (TGAC), and 67-70 (THSC).

Post-translationally, contains LL-lanthionine and DL-beta-methyllanthionine, when coepressed in E.coli with the flavecin synthetase FlvM2.

It is found in the secreted. In terms of biological role, lanthionine-containing peptide antibiotic (lantibiotic) that is probably weakly active on Gram-positive bacteria, since its analog [Del1]Flvbeta.g shows weak antibacterial activity against M.luteus. This activity is synergistically enhanced by [Del2]Flvalpha.a, an analog of Flvalpha.a, which is encoded by the same operon than Flvbeta.g. The bactericidal activity of lantibiotics is based on depolarization of energized bacterial cytoplasmic membranes, initiated by the formation of aqueous transmembrane pores. This is Lantibiotic Flvbeta.g from Ruminococcus flavefaciens.